The following is a 784-amino-acid chain: Cadherin-5 (784 aa).

Positions 1–25 (MQRLMMLLATSGACLGLLAVAAVAA) are cleaved as a signal peptide. A propeptide spanning residues 26–47 (AGANPAQRDTHSLLPTHRRQKR) is cleaved from the precursor. 5 Cadherin domains span residues 48–151 (DWIW…WPVF), 152–258 (THRL…FPFF), 259–372 (TQTK…PPIF), 373–477 (QQPF…DNAP), and 478–593 (EFAK…MAAQ). Residues 48-599 (DWIWNQMHID…MAAQVGVSIQ (552 aa)) lie on the Extracellular side of the membrane. Ca(2+) contacts are provided by Glu58 and Glu59. N-linked (GlcNAc...) (complex) asparagine glycosylation is present at Asn61. The Ca(2+) site is built by Asp109 and Glu111. An N-linked (GlcNAc...) (complex) asparagine glycan is attached at Asn112. Residues Asp143, Val144, Asn145, Asp146, and Asn147 each coordinate Ca(2+). Asn157 is a glycosylation site (N-linked (GlcNAc...) asparagine). The Ca(2+) site is built by Asp177, Asp179, His186, and Asp231. N-linked (GlcNAc...) asparagine glycosylation occurs at Asn362. N-linked (GlcNAc...) (complex) asparagine glycosylation occurs at Asn442. N-linked (GlcNAc...) asparagine glycosylation is found at Asn523 and Asn535. Residues 600–620 (AVVAILLCILTITVITLLIFL) traverse the membrane as a helical segment. The segment at 621 to 660 (RRRLRKQARAHGKSVPEIHEQLVTYDEEGGGEMDTTSYDV) is required for interaction with PALS1. Residues 621–784 (RRRLRKQARA…GSDPREELLY (164 aa)) are Cytoplasmic-facing.

Part of a complex composed of AMOTL2, MAGI1 and CDH5, within the complex AMOTL2 acts as a scaffold protein for the interaction of MAGI1 with CDH5. The complex is required for coupling actin fibers to cell junctions in endothelial cells. Within the complex AMOTL2 (via its N-terminus) interacts with CDH5. Interacts (via cadherin 5 domain) with PTPRB. Interacts with TRPC4. Interacts with KRIT1. Interacts with PARD3. Interacts with RTN4 (isoform B). Interacts with PALS1; the interaction promotes PALS1 localization to cell junctions and is required for CDH5-mediated vascular lumen formation and endothelial cell. Interacts with CTNND1/p120-catenin; the interaction controls CADH5 endocytosis. Post-translationally, phosphorylated on tyrosine residues by KDR/VEGFR-2. Dephosphorylated by PTPRB. O-glycosylated. In terms of tissue distribution, expressed in endothelial cells (at protein level). Expressed in the brain.

It localises to the cell junction. The protein localises to the adherens junction. The protein resides in the cell membrane. Its subcellular location is the cytoplasm. Functionally, cadherins are calcium-dependent cell adhesion proteins. They preferentially interact with themselves in a homophilic manner in connecting cells; cadherins may thus contribute to the sorting of heterogeneous cell types. This cadherin may play a important role in endothelial cell biology through control of the cohesion and organization of the intercellular junctions. It associates with alpha-catenin forming a link to the cytoskeleton. Plays a role in coupling actin fibers to cell junctions in endothelial cells, via acting as a cell junctional complex anchor for AMOTL2 and MAGI1. Acts in concert with KRIT1 and PALS1 to establish and maintain correct endothelial cell polarity and vascular lumen. These effects are mediated by recruitment and activation of the Par polarity complex and RAP1B. Required for activation of PRKCZ and for the localization of phosphorylated PRKCZ, PARD3, TIAM1 and RAP1B to the cell junction. Associates with CTNND1/p120-catenin to control CADH5 endocytosis. The sequence is that of Cadherin-5 from Homo sapiens (Human).